The chain runs to 512 residues: Serine/threonine-protein kinase SSN3 (512 aa).

2 disordered regions span residues 1–22 (MNNH…DRPW) and 75–94 (AEVS…TGSM). One can recognise a Protein kinase domain in the interval 106-455 (YKVVGFISSG…AAAALQHPFF (350 aa)). ATP contacts are provided by residues 112–120 (ISSGTYGRV) and Lys136. Catalysis depends on Asp238, which acts as the Proton acceptor. Disordered stretches follow at residues 368 to 388 (QPPI…RQAA) and 476 to 512 (RRVS…VKEG). Over residues 373-382 (HGGHHGHHYQ) the composition is skewed to basic residues. Composition is skewed to basic and acidic residues over residues 476-485 (RRVSQDDNDI) and 497-512 (GLPD…VKEG).

Belongs to the protein kinase superfamily. CMGC Ser/Thr protein kinase family. CDC2/CDKX subfamily. In terms of assembly, component of the SRB8-11 complex, a regulatory module of the Mediator complex. Mg(2+) serves as cofactor.

It is found in the nucleus. It catalyses the reaction L-seryl-[protein] + ATP = O-phospho-L-seryl-[protein] + ADP + H(+). The catalysed reaction is L-threonyl-[protein] + ATP = O-phospho-L-threonyl-[protein] + ADP + H(+). The enzyme catalyses [DNA-directed RNA polymerase] + ATP = phospho-[DNA-directed RNA polymerase] + ADP + H(+). Component of the SRB8-11 complex. The SRB8-11 complex is a regulatory module of the Mediator complex which is itself involved in regulation of basal and activated RNA polymerase II-dependent transcription. The SRB8-11 complex may be involved in the transcriptional repression of a subset of genes regulated by Mediator. It may inhibit the association of the Mediator complex with RNA polymerase II to form the holoenzyme complex. The SRB8-11 complex phosphorylates the C-terminal domain (CTD) of the largest subunit of RNA polymerase II. The chain is Serine/threonine-protein kinase SSN3 (SSN3) from Chaetomium globosum (strain ATCC 6205 / CBS 148.51 / DSM 1962 / NBRC 6347 / NRRL 1970) (Soil fungus).